We begin with the raw amino-acid sequence, 224 residues long: UPF0758 protein Patl_0046 (224 aa).

An MPN domain is found at 102–224; the sequence is VFNSAQQTKH…AVSFAERGLI (123 aa). H173, H175, and D186 together coordinate Zn(2+). The JAMM motif signature appears at 173–186; it reads HNHPSGVAEPSQAD.

Belongs to the UPF0758 family.

The chain is UPF0758 protein Patl_0046 from Pseudoalteromonas atlantica (strain T6c / ATCC BAA-1087).